Here is an 801-residue protein sequence, read N- to C-terminus: MLVSYKWLKELVDVDVTTAELAEKMSTTGIEVEGVETPAEGLSKLVVGHIVSCEDVPDTYLHLCQVDTGDDELRQVVCGAPNVKTGINVIVAVPGARIADNYKIKKGKIRGMESLGMICSLQELGLSESIIPKEFSDGIQILPEGAIPGDSIFSYLDLDDEIIELSITPNRADALSMRGVAHEVAAIYGKKVHFEEKNLIEEAERAADKISVVIESDKVLSYSARIVKNVTVAPSPQWLQNKLMNAGIRPINNVVDVTNYVLLTYGQPMHAFDFDKFDGTTIVARNAENGEKLITLDGEERDLIADDLVIAVNDQPVALAGVMGGQSTEIGSSSKTVVLEAAVFNGTSIRKTSGRLNLRSESSSRFEKGINYDTVSEAMDFAAAMLQELAGGQVLSGQVTEGVLPTEPVEVSTTLGYVNTRLGTELTYTDIEEVFEKLGFAISGSEVKFTVLVPRRRWDIAIQADLVEEIARIYGYEKLPTTLPEAGATAGELTSMQRLRRRVRTVAEGAGLSEIITYALTTPEKAVQFSTQATNITELMWPMTVDRSALRQNVVSGMLDTIAYNVARKNSNLAVYEIGKVFEQTGNPKEDLPTEVETFTFALTGLVEEKDFQTKAKPVDFFYAKGIVEALFIKLKLDVTFVAQKGLASMHPGRTATILLDGKEIGFVGQVHPQTAKQYDIPETYVAEINLSTIESQMNQALIFEDITKYPSVSRDIALLLAESVSHHDIVSAIETSGVKRLTAIKLFDVYAGNNIAEGYKSMAYSLTFQNPNDNLTDEEVAKYMEKITKSLVEKVNAEIR.

Residues 39-153 (AEGLSKLVVG…EGAIPGDSIF (115 aa)) form the tRNA-binding domain. The B5 domain maps to 406–481 (TEPVEVSTTL…RIYGYEKLPT (76 aa)). Mg(2+) contacts are provided by D459, D465, E468, and E469. The FDX-ACB domain occupies 708–801 (TKYPSVSRDI…LVEKVNAEIR (94 aa)).

This sequence belongs to the phenylalanyl-tRNA synthetase beta subunit family. Type 1 subfamily. Tetramer of two alpha and two beta subunits. Requires Mg(2+) as cofactor.

It localises to the cytoplasm. It catalyses the reaction tRNA(Phe) + L-phenylalanine + ATP = L-phenylalanyl-tRNA(Phe) + AMP + diphosphate + H(+). This chain is Phenylalanine--tRNA ligase beta subunit, found in Streptococcus agalactiae serotype Ia (strain ATCC 27591 / A909 / CDC SS700).